The primary structure comprises 398 residues: Leucine aminopeptidase 1 (398 aa).

An N-terminal signal peptide occupies residues 1-20 (MKFLQTSLIAAALPAALVSG). Residues 21 to 87 (RFVIENEGDN…LRAWTQSQAS (67 aa)) constitute a propeptide that is removed on maturation. Asparagine 179 is a glycosylation site (N-linked (GlcNAc...) asparagine). Histidine 187, aspartate 206, glutamate 245, and aspartate 272 together coordinate Zn(2+). Cysteines 321 and 325 form a disulfide. Histidine 354 provides a ligand contact to Zn(2+).

Belongs to the peptidase M28 family. M28E subfamily. In terms of assembly, monomer. Zn(2+) is required as a cofactor.

The protein localises to the secreted. Functionally, extracellular aminopeptidase that allows assimilation of proteinaceous substrates. This Trichoderma harzianum (Hypocrea lixii) protein is Leucine aminopeptidase 1 (lap1).